Reading from the N-terminus, the 270-residue chain is MKRSDRYKTYNKPNDSNDSNQLHHNTYFKPVNKPQKKKKGKGIILKLLIPILIIIGIIIGVMYALSLRADTDELKNITEKESFVYASDMRDYTKGAFIAMEDERFYKHHGFDVKGTSRALFSTLSDKSVQGGSTITQQVVKNYYYDNEQSITRKIKELFVAHRVEKEYDKNEILSFYMNNIYYGSDQYTIESAANHYFGVTTDKNNPNLPQISVLQSAILASKINAPSVYNINDMSDNFTNRVKTDLEKMKQQGYISNSQYENAIQELGV.

The tract at residues 1 to 35 (MKRSDRYKTYNKPNDSNDSNQLHHNTYFKPVNKPQ) is disordered. The span at 11–24 (NKPNDSNDSNQLHH) shows a compositional bias: polar residues. The chain crosses the membrane as a helical span at residues 47–67 (LLIPILIIIGIIIGVMYALSL).

Belongs to the glycosyltransferase 51 family.

The protein resides in the cell membrane. The enzyme catalyses [GlcNAc-(1-&gt;4)-Mur2Ac(oyl-L-Ala-gamma-D-Glu-L-Lys-D-Ala-D-Ala)](n)-di-trans,octa-cis-undecaprenyl diphosphate + beta-D-GlcNAc-(1-&gt;4)-Mur2Ac(oyl-L-Ala-gamma-D-Glu-L-Lys-D-Ala-D-Ala)-di-trans,octa-cis-undecaprenyl diphosphate = [GlcNAc-(1-&gt;4)-Mur2Ac(oyl-L-Ala-gamma-D-Glu-L-Lys-D-Ala-D-Ala)](n+1)-di-trans,octa-cis-undecaprenyl diphosphate + di-trans,octa-cis-undecaprenyl diphosphate + H(+). It functions in the pathway cell wall biogenesis; peptidoglycan biosynthesis. Its function is as follows. Peptidoglycan polymerase that catalyzes glycan chain elongation using lipid-linked disaccharide-pentapeptide as the substrate. The polypeptide is Monofunctional glycosyltransferase (Staphylococcus saprophyticus subsp. saprophyticus (strain ATCC 15305 / DSM 20229 / NCIMB 8711 / NCTC 7292 / S-41)).